The primary structure comprises 557 residues: Dihydroxy-acid dehydratase (557 aa).

Cysteine 50 contributes to the [2Fe-2S] cluster binding site. Aspartate 82 lines the Mg(2+) pocket. Cysteine 123 lines the [2Fe-2S] cluster pocket. Aspartate 124 and lysine 125 together coordinate Mg(2+). N6-carboxylysine is present on lysine 125. A [2Fe-2S] cluster-binding site is contributed by cysteine 195. Position 447 (glutamate 447) interacts with Mg(2+). The active-site Proton acceptor is serine 473.

The protein belongs to the IlvD/Edd family. As to quaternary structure, homodimer. Requires [2Fe-2S] cluster as cofactor. The cofactor is Mg(2+).

The catalysed reaction is (2R)-2,3-dihydroxy-3-methylbutanoate = 3-methyl-2-oxobutanoate + H2O. It carries out the reaction (2R,3R)-2,3-dihydroxy-3-methylpentanoate = (S)-3-methyl-2-oxopentanoate + H2O. Its pathway is amino-acid biosynthesis; L-isoleucine biosynthesis; L-isoleucine from 2-oxobutanoate: step 3/4. The protein operates within amino-acid biosynthesis; L-valine biosynthesis; L-valine from pyruvate: step 3/4. In terms of biological role, functions in the biosynthesis of branched-chain amino acids. Catalyzes the dehydration of (2R,3R)-2,3-dihydroxy-3-methylpentanoate (2,3-dihydroxy-3-methylvalerate) into 2-oxo-3-methylpentanoate (2-oxo-3-methylvalerate) and of (2R)-2,3-dihydroxy-3-methylbutanoate (2,3-dihydroxyisovalerate) into 2-oxo-3-methylbutanoate (2-oxoisovalerate), the penultimate precursor to L-isoleucine and L-valine, respectively. The protein is Dihydroxy-acid dehydratase of Ralstonia nicotianae (strain ATCC BAA-1114 / GMI1000) (Ralstonia solanacearum).